We begin with the raw amino-acid sequence, 192 residues long: Der GTPase-activating protein YihI (192 aa).

The disordered stretch occupies residues Met-1–Pro-80. Basic and acidic residues-rich tracts occupy residues Arg-9 to Gln-25, Thr-37 to Glu-48, and Asp-65 to Pro-80.

The protein belongs to the YihI family. Interacts with Der.

Its function is as follows. A GTPase-activating protein (GAP) that modifies Der/EngA GTPase function. May play a role in ribosome biogenesis. The chain is Der GTPase-activating protein YihI from Actinobacillus pleuropneumoniae serotype 5b (strain L20).